The primary structure comprises 41 residues: Large ribosomal subunit protein bL36 (41 aa).

It belongs to the bacterial ribosomal protein bL36 family.

This chain is Large ribosomal subunit protein bL36, found in Hyphomonas neptunium (strain ATCC 15444).